An 856-amino-acid chain; its full sequence is Histone-lysine N-methyltransferase EZA1 (856 aa).

The span at 1-11 (MVTDDSNSSGR) shows a compositional bias: polar residues. Disordered stretches follow at residues 1 to 34 (MVTD…GLEN), 66 to 87 (VSPF…NSNM), and 366 to 473 (NVDS…HHGS). A compositionally biased stretch (acidic residues) spans 17–28 (DDDDDGEEEEDR). Residues 22-49 (GEEEEDRLEGLENRLSELKRKIQGERVR) are a coiled coil. Positions 68–87 (PFSSAASSRATAEDNGNSNM) are enriched in polar residues. Basic and acidic residues predominate over residues 374-392 (EQEHGIRGKREVPILKDSN). Over residues 393–419 (DLPNLSNKKQKTAASDTKMSFVNSVPS) the composition is skewed to polar residues. The segment covering 438 to 451 (KVNRDSEADAKEVG) has biased composition (basic and acidic residues). One can recognise an SANT domain in the interval 489-539 (PSTEWNPIEKDLYLKGVEIFGRNSCLIARNLLSGLKTCLDVSNYMRENEVS). The 100-residue stretch at 594–693 (WKRIAGGKNQ…SLGEAPRRGE (100 aa)) folds into the CXC domain. Residues 707–822 (QRILLGKSDV…ASEELFYDYR (116 aa)) form the SET domain. Position 821 (Tyr821) interacts with S-adenosyl-L-methionine. Residues 827–856 (QAPVWARKPEGSKKDDSAITHRRARKHQSH) form a disordered region. A compositionally biased stretch (basic and acidic residues) spans 833 to 845 (RKPEGSKKDDSAI). Residues 838–845 (SKKDDSAI) carry the Nuclear localization signal motif. A compositionally biased stretch (basic residues) spans 846 to 856 (THRRARKHQSH).

Belongs to the class V-like SAM-binding methyltransferase superfamily. Histone-lysine methyltransferase family. EZ subfamily. Component of the plant homeodomain / polycomb repressive complex 2 (PHD-PRC2) large complex during prolonged cold, composed of core PRC2 components (VRN2, EZA1, FIE and MSI1), and three related PHD finger proteins (VIL1, VIL2 and VIN3) that mediates histone H3 trimethylation on 'Lys-27' H3K27me3. Interacts with TAF13. Interacts with EOL1. Interacts (via SANT domain) with HXK1 in the nucleus.

It is found in the nucleus. The enzyme catalyses L-lysyl(27)-[histone H3] + 3 S-adenosyl-L-methionine = N(6),N(6),N(6)-trimethyl-L-lysyl(27)-[histone H3] + 3 S-adenosyl-L-homocysteine + 3 H(+). In terms of biological role, polycomb group (PcG) protein. Catalytic subunit of some PcG multiprotein complex, which methylates 'Lys-27' of histone H3, leading to transcriptional repression of the affected target genes, mainly abscisic acid (ABA) responsive elements. PcG proteins act by forming multiprotein complexes, which are required to maintain the transcriptionally repressive state of homeotic genes throughout development. PcG proteins are not required to initiate repression, but to maintain it during later stages of development. Forms a nuclear complex with CLF and HXK1 to target common glucose-responsive genes and regulate glucose signaling by glucose-mediated gene repression. Affects the recruitment of HXK1 to the target chromatin. The polypeptide is Histone-lysine N-methyltransferase EZA1 (Arabidopsis thaliana (Mouse-ear cress)).